Here is a 70-residue protein sequence, read N- to C-terminus: uncharacterized protein (70 aa).

In terms of domain architecture, HTH cro/C1-type spans 5-59; the sequence is IREFRAKYGMTQEELAKKVGVRRETIVFLEKGKYNPSLRLAYKIARVFNARIEDL. The segment at residues 16 to 35 is a DNA-binding region (H-T-H motif); that stretch reads QEELAKKVGVRRETIVFLEK.

This is an uncharacterized protein from Archaeoglobus fulgidus (strain ATCC 49558 / DSM 4304 / JCM 9628 / NBRC 100126 / VC-16).